The following is a 1806-amino-acid chain: Atrochrysone carboxylic acid synthase (1806 aa).

An N-terminal acylcarrier protein transacylase domain (SAT) region spans residues 30–283 (DLQGLFRRLY…SLPVYSGLCH (254 aa)). One can recognise a Ketosynthase family 3 (KS3) domain in the interval 416–850 (QSKIAIIGMS…GGNTTVCLEE (435 aa)). Active-site for beta-ketoacyl synthase activity residues include cysteine 589, histidine 725, and histidine 768. The malonyl-CoA:ACP transacylase (MAT) domain stretch occupies residues 951–1270 (FAFTGQGASY…SLTALHCAGV (320 aa)). Positions 1340–1659 (TSTVQQIIEE…RILLNRFFTA (320 aa)) are product template (PT) domain. The interval 1344-1479 (QQIIEESFNG…ASILYDDAAL (136 aa)) is N-terminal hotdog fold. The PKS/mFAS DH domain occupies 1344–1654 (QQIIEESFNG…FRRYPRILLN (311 aa)). Catalysis depends on histidine 1376, which acts as the Proton acceptor; for dehydratase activity. Residues 1506–1654 (IANRFTRNMA…FRRYPRILLN (149 aa)) are C-terminal hotdog fold. Residue aspartate 1565 is the Proton donor; for dehydratase activity of the active site. The disordered stretch occupies residues 1668–1726 (HAAASSTPAPRTKPEPVPVATPATAAAPVAQSPAAPASVTPAPAPAPAPGPTPAAAPAA). Residues 1685-1708 (PVATPATAAAPVAQSPAAPASVTP) show a composition bias toward low complexity. Residues 1709–1721 (APAPAPAPGPTPA) show a composition bias toward pro residues. Residues 1728-1805 (GESDSVAAKA…DLRSWLLEYY (78 aa)) form the Carrier domain. Serine 1765 carries the O-(pantetheine 4'-phosphoryl)serine modification.

The catalysed reaction is holo-[ACP] + 8 malonyl-CoA + 8 H(+) = atrochrysone carboxyl-[ACP] + 8 CO2 + 8 CoA + 2 H2O. It functions in the pathway secondary metabolite biosynthesis. Its function is as follows. Atrochrysone carboxylic acid synthase; part of the gene cluster that mediates the biosynthesis of monodictyphenone, a prenyl xanthone derivative. The pathway begins with the synthesis of atrochrysone thioester by the polyketide synthase (PKS) mdpG. The atrochrysone carboxyl ACP thioesterase mdpF then breaks the thioester bond and releases the atrochrysone carboxylic acid from mdpG. The atrochrysone carboxylic acid is then converted to atrochrysone which is further transformed into emodin anthrone. The next step is performed by the anthrone oxygenase mdpH that catalyzes the oxidation of emodinanthrone to emodin. Emodin is further modified to yield monodictyphenone via several steps involving mdpB, mdpC mdpJ, mdpK and mdpL. The short chain dehydrogenase mdpC converts the tautomers of emodin hydroquinone into the 3-hydroxy-3,4-dihydroan-thracen-1(2H)-one derivative. These enzymes with xptA, xptB and xptC are also proposed to be involved in the synthesis of shamixanthone from emodin. Especially, direct reduction of emodin by the short chain dehydrogenase mdpC followed by dehydration catalyzed by the scytalone dehydratase-like protein mdpB gives loss of oxygen and formation of chrysophanol intermediate in two simple steps. In Emericella nidulans (strain FGSC A4 / ATCC 38163 / CBS 112.46 / NRRL 194 / M139) (Aspergillus nidulans), this protein is Atrochrysone carboxylic acid synthase.